The primary structure comprises 457 residues: tRNA (guanine(37)-N(1))-methyltransferase (457 aa).

Residues His225, 263–264 (DL), 291–292 (DG), and Asn358 each bind S-adenosyl-L-methionine.

The protein belongs to the class I-like SAM-binding methyltransferase superfamily. TRM5/TYW2 family. Monomer.

The protein resides in the mitochondrion matrix. The protein localises to the nucleus. Its subcellular location is the cytoplasm. It carries out the reaction guanosine(37) in tRNA + S-adenosyl-L-methionine = N(1)-methylguanosine(37) in tRNA + S-adenosyl-L-homocysteine + H(+). Its function is as follows. Specifically methylates the N1 position of guanosine-37 in various cytoplasmic and mitochondrial tRNAs. Methylation is not dependent on the nature of the nucleoside 5' of the target nucleoside. This is the first step in the biosynthesis of wybutosine (yW), a modified base adjacent to the anticodon of tRNAs and required for accurate decoding. This is tRNA (guanine(37)-N(1))-methyltransferase from Coprinopsis cinerea (strain Okayama-7 / 130 / ATCC MYA-4618 / FGSC 9003) (Inky cap fungus).